Consider the following 644-residue polypeptide: Arginine--tRNA ligase (644 aa).

The short motif at 134–144 (VNPTKPLHMGH) is the 'HIGH' region element.

Belongs to the class-I aminoacyl-tRNA synthetase family.

The protein localises to the cytoplasm. It carries out the reaction tRNA(Arg) + L-arginine + ATP = L-arginyl-tRNA(Arg) + AMP + diphosphate. In Thermococcus sibiricus (strain DSM 12597 / MM 739), this protein is Arginine--tRNA ligase.